A 462-amino-acid polypeptide reads, in one-letter code: Cysteine--tRNA ligase (462 aa).

Residue Cys-29 participates in Zn(2+) binding. Residues 31-41 (MTVYDLCHLGH) carry the 'HIGH' region motif. Cys-217, His-242, and Glu-246 together coordinate Zn(2+). Residues 274-278 (KMSKS) carry the 'KMSKS' region motif. Lys-277 contacts ATP.

It belongs to the class-I aminoacyl-tRNA synthetase family. Monomer. It depends on Zn(2+) as a cofactor.

Its subcellular location is the cytoplasm. It catalyses the reaction tRNA(Cys) + L-cysteine + ATP = L-cysteinyl-tRNA(Cys) + AMP + diphosphate. This chain is Cysteine--tRNA ligase, found in Polaromonas sp. (strain JS666 / ATCC BAA-500).